The sequence spans 104 residues: Iron-sulfur cluster assembly protein CyaY (104 aa).

Belongs to the frataxin family.

Involved in iron-sulfur (Fe-S) cluster assembly. May act as a regulator of Fe-S biogenesis. The chain is Iron-sulfur cluster assembly protein CyaY from Aeromonas salmonicida (strain A449).